Reading from the N-terminus, the 997-residue chain is Glutamate [NMDA] receptor subunit 1 (997 aa).

The first 26 residues, 1-26 (MAVAGFVFCWPLLGLTIVLLVAPIDA), serve as a signal peptide directing secretion. Topologically, residues 27 to 573 (AQRHTASDNP…TLVSFLQPFS (547 aa)) are extracellular. Residues N258, N314, N345, N397, N454, N481, and N501 are each glycosylated (N-linked (GlcNAc...) asparagine). Glycine contacts are provided by residues 530–532 (PLT) and R537. The helical transmembrane segment at 574 to 594 (NTLWILVMVSVHVVALVLYLL) threads the bilayer. The Cytoplasmic segment spans residues 595-651 (DRFSPFGRFKLSHSDSNEEKALNLSSAVWFAWGVLLNSGIGEGTPRSFSARVLGMVW). A helical transmembrane segment spans residues 652 to 672 (AGFAMIIVASYTANLAAFLVL). Residues 673 to 831 (ERPKTKLSGI…KTPNTLGLKN (159 aa)) are Extracellular-facing. N693 is a glycosylation site (N-linked (GlcNAc...) asparagine). The glycine site is built by S703 and D747. The chain crosses the membrane as a helical span at residues 832-852 (MAGVFILVGVGIAGGVGLIII). The Cytoplasmic portion of the chain corresponds to 853–997 (EVIYKKHQVK…YTSDVSHLVV (145 aa)). The segment at 970 to 997 (LGKTRPQQSVLPPRYSPGYTSDVSHLVV) is disordered. Residues 987 to 997 (GYTSDVSHLVV) are compositionally biased toward polar residues.

The protein belongs to the glutamate-gated ion channel (TC 1.A.10.1) family. As to quaternary structure, forms a heteromeric NMDA channel with Nmdar2.

The protein resides in the cell membrane. It is found in the postsynaptic cell membrane. Its subcellular location is the postsynaptic density. Functionally, NMDA receptor subtype of glutamate-gated ion channels with high calcium permeability and voltage-dependent sensitivity to magnesium. Mediated by glycine. This protein plays a key role in synaptic plasticity, synaptogenesis, excitotoxicity, memory acquisition and learning. It mediates neuronal functions in glutamate neurotransmission. Is involved in the cell surface targeting of NMDA receptors. Plays a role in associative learning and in long-term memory consolidation. The protein is Glutamate [NMDA] receptor subunit 1 of Drosophila yakuba (Fruit fly).